Here is a 635-residue protein sequence, read N- to C-terminus: Threonine--tRNA ligase (635 aa).

The 61-residue stretch at 1–61 (MIKITLKDGK…HKDSSLEILT (61 aa)) folds into the TGS domain. The catalytic stretch occupies residues 242-532 (DHRKLGKELD…LIEQYAGAFP (291 aa)). 3 residues coordinate Zn(2+): cysteine 333, histidine 384, and histidine 509.

Belongs to the class-II aminoacyl-tRNA synthetase family. In terms of assembly, homodimer. It depends on Zn(2+) as a cofactor.

The protein localises to the cytoplasm. It carries out the reaction tRNA(Thr) + L-threonine + ATP = L-threonyl-tRNA(Thr) + AMP + diphosphate + H(+). Its function is as follows. Catalyzes the attachment of threonine to tRNA(Thr) in a two-step reaction: L-threonine is first activated by ATP to form Thr-AMP and then transferred to the acceptor end of tRNA(Thr). Also edits incorrectly charged L-seryl-tRNA(Thr). The sequence is that of Threonine--tRNA ligase from Clostridium botulinum (strain Langeland / NCTC 10281 / Type F).